Reading from the N-terminus, the 378-residue chain is 3-dehydroquinate synthase (378 aa).

NAD(+)-binding positions include 115-119 (GVVGD), 139-140 (TS), K152, and K161. Zn(2+)-binding residues include E194, H256, and H275.

It belongs to the sugar phosphate cyclases superfamily. Dehydroquinate synthase family. It depends on Co(2+) as a cofactor. Requires Zn(2+) as cofactor. NAD(+) is required as a cofactor.

It is found in the cytoplasm. It carries out the reaction 7-phospho-2-dehydro-3-deoxy-D-arabino-heptonate = 3-dehydroquinate + phosphate. It participates in metabolic intermediate biosynthesis; chorismate biosynthesis; chorismate from D-erythrose 4-phosphate and phosphoenolpyruvate: step 2/7. In terms of biological role, catalyzes the conversion of 3-deoxy-D-arabino-heptulosonate 7-phosphate (DAHP) to dehydroquinate (DHQ). The protein is 3-dehydroquinate synthase of Brucella suis (strain ATCC 23445 / NCTC 10510).